Reading from the N-terminus, the 632-residue chain is Putative ferric transport system permease protein FbpB 1 (632 aa).

Transmembrane regions (helical) follow at residues 5 to 25 (SFNLTWAWFLPVIVYGALPLL), 37 to 57 (LFLTALSVLFMFISATVYKIS), 58 to 78 (MGYSVIVLLVGYTALATLSLA), 93 to 113 (LLCIILLIFFFIVYPTLAIFV), 144 to 164 (LFLSGFVGIVSTVFGLAFALY), 178 to 198 (IFSILPIVTPPFVVGLGVTLM), 223 to 243 (GFNGIAIAQILAFAPISFMIL), 270 to 290 (YQIIFPLLRPALANSFLIVFI), 299 to 319 (PLVLGGSFDVIATQIYFYIAG), 330 to 350 (LGSMLLIFSLAIFIIQYIWIG), 377 to 397 (IIGMLGFWVIFNMALYGSIFY), 436 to 456 (IYAGIAAPLTAFFGLLIAYIV), 469 to 489 (FLTMLCFAVPGTVAGVSYILA), 490 to 510 (FNNAPLYITGTGIIVIISMVM), and 547 to 567 (CFIVLPLLKPALLSALVTSFV). An ABC transmembrane type-1 1 domain is found at 140-345 (ITNSLFLSGF…IFSLAIFIIQ (206 aa)). One can recognise an ABC transmembrane type-1 2 domain in the interval 431–632 (LINTLIYAGI…DCRRYAYFPF (202 aa)).

The protein belongs to the binding-protein-dependent transport system permease family. FbpB subfamily. The complex is composed of two ATP-binding proteins (FbpC), two transmembrane proteins (FbpB) and a solute-binding protein (FbpA).

The protein localises to the cell inner membrane. Part of the ABC transporter complex FbpABC (TC 3.A.1.10.1) involved in Fe(3+) ions import. Probably responsible for the translocation of the substrate across the membrane. The chain is Putative ferric transport system permease protein FbpB 1 (fbpB1) from Haemophilus influenzae (strain ATCC 51907 / DSM 11121 / KW20 / Rd).